The sequence spans 322 residues: Phosphatidylserine decarboxylase proenzyme (322 aa).

Catalysis depends on charge relay system; for autoendoproteolytic cleavage activity residues D90, H147, and S254. S254 functions as the Schiff-base intermediate with substrate; via pyruvic acid; for decarboxylase activity in the catalytic mechanism. S254 is modified (pyruvic acid (Ser); by autocatalysis). The segment at 293–322 (PDAEPAPLPAEEIEAEHDASPLVDDKKDQV) is disordered. Basic and acidic residues predominate over residues 308-322 (EHDASPLVDDKKDQV).

This sequence belongs to the phosphatidylserine decarboxylase family. PSD-B subfamily. Prokaryotic type I sub-subfamily. Heterodimer of a large membrane-associated beta subunit and a small pyruvoyl-containing alpha subunit. The cofactor is pyruvate. In terms of processing, is synthesized initially as an inactive proenzyme. Formation of the active enzyme involves a self-maturation process in which the active site pyruvoyl group is generated from an internal serine residue via an autocatalytic post-translational modification. Two non-identical subunits are generated from the proenzyme in this reaction, and the pyruvate is formed at the N-terminus of the alpha chain, which is derived from the carboxyl end of the proenzyme. The autoendoproteolytic cleavage occurs by a canonical serine protease mechanism, in which the side chain hydroxyl group of the serine supplies its oxygen atom to form the C-terminus of the beta chain, while the remainder of the serine residue undergoes an oxidative deamination to produce ammonia and the pyruvoyl prosthetic group on the alpha chain. During this reaction, the Ser that is part of the protease active site of the proenzyme becomes the pyruvoyl prosthetic group, which constitutes an essential element of the active site of the mature decarboxylase.

The protein resides in the cell membrane. It catalyses the reaction a 1,2-diacyl-sn-glycero-3-phospho-L-serine + H(+) = a 1,2-diacyl-sn-glycero-3-phosphoethanolamine + CO2. The protein operates within phospholipid metabolism; phosphatidylethanolamine biosynthesis; phosphatidylethanolamine from CDP-diacylglycerol: step 2/2. Its function is as follows. Catalyzes the formation of phosphatidylethanolamine (PtdEtn) from phosphatidylserine (PtdSer). The sequence is that of Phosphatidylserine decarboxylase proenzyme from Escherichia coli O45:K1 (strain S88 / ExPEC).